A 671-amino-acid chain; its full sequence is UvrABC system protein B (671 aa).

Residues 26-183 form the Helicase ATP-binding domain; it reads EGLENGLAHQ…RRLSELQYSR (158 aa). Residue 39 to 46 coordinates ATP; it reads GVTGSGKT. Positions 92–115 match the Beta-hairpin motif; sequence YYDYYQPEAYVPSSDTFIEKDASV. The region spanning 431–593 is the Helicase C-terminal domain; that stretch reads QVDDLLSEIR…IIPQGLNKKI (163 aa). The UVR domain maps to 631-666; the sequence is DQKIRELEAKMYTYAQNLEFEQAAELRDQVHQLRQQ.

It belongs to the UvrB family. In terms of assembly, forms a heterotetramer with UvrA during the search for lesions. Interacts with UvrC in an incision complex.

It localises to the cytoplasm. Its function is as follows. The UvrABC repair system catalyzes the recognition and processing of DNA lesions. A damage recognition complex composed of 2 UvrA and 2 UvrB subunits scans DNA for abnormalities. Upon binding of the UvrA(2)B(2) complex to a putative damaged site, the DNA wraps around one UvrB monomer. DNA wrap is dependent on ATP binding by UvrB and probably causes local melting of the DNA helix, facilitating insertion of UvrB beta-hairpin between the DNA strands. Then UvrB probes one DNA strand for the presence of a lesion. If a lesion is found the UvrA subunits dissociate and the UvrB-DNA preincision complex is formed. This complex is subsequently bound by UvrC and the second UvrB is released. If no lesion is found, the DNA wraps around the other UvrB subunit that will check the other stand for damage. This is UvrABC system protein B from Yersinia pestis bv. Antiqua (strain Antiqua).